Reading from the N-terminus, the 988-residue chain is Putative disease resistance protein RGA4 (988 aa).

The 303-residue stretch at 137 to 439 (AAAATRETGF…MAHGFLLSKG (303 aa)) folds into the NB-ARC domain. ATP is bound at residue 184-191 (GMGGLGKT). LRR repeat units lie at residues 526–548 (FVSL…SIGD), 549–572 (LLHL…LCKL), 574–595 (NLQT…QTSK), 596–620 (LSSL…GLLT), 638–662 (LGEL…KNDT), 674–696 (LQSL…EVKV), 751–776 (LPCL…DVHS), 784–808 (FPSL…EGEE), 829–851 (LSSV…SISN), 852–876 (LSTL…MFTS), 878–900 (TNLE…SLTS), 901–925 (LNAL…GLEG), 927–950 (TSLT…LQHL), and 966–988 (KRCD…LDIH).

It belongs to the disease resistance NB-LRR family.

Its function is as follows. Disease resistance protein. Resistance proteins guard the plant against pathogens that contain an appropriate avirulence protein via a direct or indirect interaction with this avirulence protein. That triggers a defense system which restricts the pathogen growth. This Solanum bulbocastanum (Wild potato) protein is Putative disease resistance protein RGA4 (RGA4).